The following is a 70-amino-acid chain: Beta-defensin 131B (70 aa).

A signal peptide spans 1–22 (MRVLFFVFGVLSLMSTVPPTRS). Intrachain disulfides connect C29–C56, C36–C50, and C40–C57.

It belongs to the beta-defensin family.

It localises to the secreted. Has antibacterial activity. The chain is Beta-defensin 131B from Homo sapiens (Human).